Consider the following 41-residue polypeptide: GTPCDCYGYTGVYWFMLSRCPSGYGYNLSCHYFMGICCVKR.

Intrachain disulfides connect C4–C37, C6–C30, and C20–C38.

This sequence belongs to the sea anemone type 3 (BDS) potassium channel toxin family.

The protein resides in the secreted. Its subcellular location is the nematocyst. Functionally, toxin with different activities on acid-sensing ion channels (ASIC) and nicotinic acetylcholine receptors. Is able to bind T.californica muscle-type nicotinic acetylcholine receptors (nAChR) (alpha-1-beta-1-delta-epsilon (CHRNA1-CHRNB1-CHRND-CHRNE)), and human alpha-7/CHRNA7 nicotinic acetylcholine receptors. Weakly and reversibly inhibits rat homomeric ASIC1 (isoform ASIC1a) (IC(50)=1.25 uM), while it potentiates rat homomeric ASIC3 (EC(50)=1.53 uM). Rat ASIC1a current inhibition is not complete, and reaches a maximum of 86% inhibition. On rat ASIC3, does not activate the channel itself, but produces a remarkable potentiation of the transient current resulting from the acidic pulse. At the maximal applied concentration, elicits responses that are twice as high as those produced by extracellular protons. Surprisingly, shows a different activity on human ASIC3. On the truncated human ASIC3 (ASIC3-D20), the toxin weakly inhibits the channel. Molecular modeling interaction with rat ASIC1a suggests that it hinders the collapse of acidic pockets and stabilizes nonconducting channels state. In vivo, causes an anxiolytic effect on mouse behavior. Also shows an analgesic activity in an acid-induced muscle pain model, and important anti-inflammatory effect in models of acute local inflammation. The protein is Pi-stichotoxin-Hmg5c of Heteractis magnifica (Magnificent sea anemone).